The following is a 611-amino-acid chain: E-selectin (611 aa).

A signal peptide spans 1–22; that stretch reads MITSQLLPALTLVLLLFKEGGA. The 118-residue stretch at 23 to 140 folds into the C-type lectin domain; sequence WSYNASTEAM…CDKKKLALCY (118 aa). At 23–557 the chain is on the extracellular side; the sequence is WSYNASTEAM…CEAPTESSIP (535 aa). N26 carries N-linked (GlcNAc...) asparagine glycosylation. 19 cysteine pairs are disulfide-bonded: C41–C139, C112–C131, C144–C155, C149–C164, C166–C175, C181–C225, C194–C207, C211–C238, C243–C287, C256–C269, C273–C300, C305–C350, C336–C363, C368–C413, C399–C426, C431–C476, C462–C489, C494–C535, and C521–C548. The Ca(2+) site is built by E102, N104, and E110. Residues 102 to 110, 114 to 119, and 127 to 129 each bind a carbohydrate; these read EPNNKQNDE, EIYIKR, and NDE. Ca(2+)-binding residues include N127 and D128. Positions 141–176 constitute an EGF-like domain; sequence TAACTPTSCSGHGECVETVNNYTCKCHPGFRGLRCE. N161 carries an N-linked (GlcNAc...) asparagine glycan. Sushi domains lie at 179–240 and 241–302; these read VTCQ…ACNV and VECS…TCKA. Residue N204 is glycosylated (N-linked (GlcNAc...) asparagine). N266 carries an N-linked (GlcNAc...) asparagine glycan. Residues N313 and N333 are each glycosylated (N-linked (GlcNAc...) asparagine). Sushi domains lie at 316-365, 367-428, 430-491, and 492-550; these read VSCS…VCKA, QCKA…TCEA, KCDA…SCQV, and VQCF…TCEA. An N-linked (GlcNAc...) asparagine glycan is attached at N528. Residues 558–579 traverse the membrane as a helical segment; sequence LAVGLTAGGTSLLTVASFLLWL. The Cytoplasmic segment spans residues 580–611; that stretch reads LKRLRKRAKKFVPASSCQSLQSDGSYHMPCSI.

It belongs to the selectin/LECAM family. In terms of assembly, interacts with SELPLG/PSGL1 and PODXL2 through the sialyl Lewis X epitope. SELPLG sulfation appears not to be required for this interaction.

Its subcellular location is the cell membrane. Its function is as follows. Cell-surface glycoprotein having a role in immunoadhesion. Mediates in the adhesion of blood neutrophils in cytokine-activated endothelium through interaction with SELPLG/PSGL1. May have a role in capillary morphogenesis. In Canis lupus familiaris (Dog), this protein is E-selectin (SELE).